The primary structure comprises 275 residues: Formamidopyrimidine-DNA glycosylase (275 aa).

Proline 2 functions as the Schiff-base intermediate with DNA in the catalytic mechanism. The Proton donor role is filled by glutamate 3. Lysine 58 serves as the catalytic Proton donor; for beta-elimination activity. Residues histidine 91 and arginine 110 each contribute to the DNA site. Residues 238–272 form an FPG-type zinc finger; sequence QVYGQTGKPCPRCGQAIVKLKVGGRGTHICPKCQK. Arginine 262 acts as the Proton donor; for delta-elimination activity in catalysis.

The protein belongs to the FPG family. Monomer. Zn(2+) is required as a cofactor.

The enzyme catalyses Hydrolysis of DNA containing ring-opened 7-methylguanine residues, releasing 2,6-diamino-4-hydroxy-5-(N-methyl)formamidopyrimidine.. It carries out the reaction 2'-deoxyribonucleotide-(2'-deoxyribose 5'-phosphate)-2'-deoxyribonucleotide-DNA = a 3'-end 2'-deoxyribonucleotide-(2,3-dehydro-2,3-deoxyribose 5'-phosphate)-DNA + a 5'-end 5'-phospho-2'-deoxyribonucleoside-DNA + H(+). Involved in base excision repair of DNA damaged by oxidation or by mutagenic agents. Acts as a DNA glycosylase that recognizes and removes damaged bases. Has a preference for oxidized purines, such as 7,8-dihydro-8-oxoguanine (8-oxoG). Has AP (apurinic/apyrimidinic) lyase activity and introduces nicks in the DNA strand. Cleaves the DNA backbone by beta-delta elimination to generate a single-strand break at the site of the removed base with both 3'- and 5'-phosphates. The chain is Formamidopyrimidine-DNA glycosylase from Streptococcus pyogenes serotype M18 (strain MGAS8232).